We begin with the raw amino-acid sequence, 89 residues long: MALTQQRKQEIINNYQVHGTDTGSTDVQIAMLTERINRLSEHLQANKKDHSSRRGLLKLIGHRKRLLAYLQQESREKYQALISRLGIRG.

It belongs to the universal ribosomal protein uS15 family. As to quaternary structure, part of the 30S ribosomal subunit. Forms a bridge to the 50S subunit in the 70S ribosome, contacting the 23S rRNA.

One of the primary rRNA binding proteins, it binds directly to 16S rRNA where it helps nucleate assembly of the platform of the 30S subunit by binding and bridging several RNA helices of the 16S rRNA. In terms of biological role, forms an intersubunit bridge (bridge B4) with the 23S rRNA of the 50S subunit in the ribosome. In Trichormus variabilis (strain ATCC 29413 / PCC 7937) (Anabaena variabilis), this protein is Small ribosomal subunit protein uS15.